The chain runs to 133 residues: Profilin-2 (133 aa).

A disulfide bridge connects residues Cys-13 and Cys-117. An Involved in PIP2 interaction motif is present at residues 83 to 99 (AVIRGKKGSGGITIKKT). Thr-113 is subject to Phosphothreonine.

It belongs to the profilin family. In terms of assembly, occurs in many kinds of cells as a complex with monomeric actin in a 1:1 ratio. Phosphorylated by MAP kinases.

The protein resides in the cytoplasm. Its subcellular location is the cytoskeleton. Its function is as follows. Binds to actin and affects the structure of the cytoskeleton. At high concentrations, profilin prevents the polymerization of actin, whereas it enhances it at low concentrations. This Corylus avellana (European hazel) protein is Profilin-2.